The following is a 52-amino-acid chain: Large ribosomal subunit protein bL33 (52 aa).

It belongs to the bacterial ribosomal protein bL33 family.

The chain is Large ribosomal subunit protein bL33 (rpmG) from Chlamydia pneumoniae (Chlamydophila pneumoniae).